We begin with the raw amino-acid sequence, 130 residues long: T-cell receptor beta chain V region A20.2.25 (130 aa).

The N-terminal stretch at 1–21 is a signal peptide; it reads MSCRLLLYVSLCLVETALMNT. The v segment stretch occupies residues 22 to 112; the sequence is KITQSPRYLI…DSAVYFCASS (91 aa). Asn36 and Asn75 each carry an N-linked (GlcNAc...) asparagine glycan. The tract at residues 113–115 is d segment; that stretch reads HGE. The j segment stretch occupies residues 116-130; that stretch reads NTEVFFGKGTTLTVV.

The protein is T-cell receptor beta chain V region A20.2.25 of Mus musculus (Mouse).